The primary structure comprises 486 residues: Membrane-bound lytic murein transglycosylase F (486 aa).

An N-terminal signal peptide occupies residues 1–26 (MFSPMALRPRCAKWLIVTGLFLMLGA). The non-LT domain stretch occupies residues 27–267 (CVEKPSTLER…RLKDRYYGHV (241 aa)). The interval 268-486 (DVLGYVGAYT…TKPPEENPPL (219 aa)) is LT domain. Residue glutamate 314 is part of the active site. The interval 464–486 (VAEGNLHVPGVNKTKPPEENPPL) is disordered.

The protein in the N-terminal section; belongs to the bacterial solute-binding protein 3 family. This sequence in the C-terminal section; belongs to the transglycosylase Slt family.

The protein resides in the cell outer membrane. It carries out the reaction Exolytic cleavage of the (1-&gt;4)-beta-glycosidic linkage between N-acetylmuramic acid (MurNAc) and N-acetylglucosamine (GlcNAc) residues in peptidoglycan, from either the reducing or the non-reducing ends of the peptidoglycan chains, with concomitant formation of a 1,6-anhydrobond in the MurNAc residue.. In terms of biological role, murein-degrading enzyme that degrades murein glycan strands and insoluble, high-molecular weight murein sacculi, with the concomitant formation of a 1,6-anhydromuramoyl product. Lytic transglycosylases (LTs) play an integral role in the metabolism of the peptidoglycan (PG) sacculus. Their lytic action creates space within the PG sacculus to allow for its expansion as well as for the insertion of various structures such as secretion systems and flagella. The chain is Membrane-bound lytic murein transglycosylase F from Pseudomonas fluorescens (strain ATCC BAA-477 / NRRL B-23932 / Pf-5).